The chain runs to 518 residues: Xylose import ATP-binding protein XylG (518 aa).

ABC transporter domains are found at residues 6 to 245 (LQMN…VGRE) and 262 to 507 (FEAR…LSHP). 38 to 45 (GENGTGKS) is an ATP binding site.

Belongs to the ABC transporter superfamily. Xylose importer (TC 3.A.1.2.4) family. In terms of assembly, the complex is composed of two ATP-binding proteins (XylG), two transmembrane proteins (XylH) and a solute-binding protein (XylF).

The protein localises to the cell inner membrane. The catalysed reaction is D-xylose(out) + ATP + H2O = D-xylose(in) + ADP + phosphate + H(+). In terms of biological role, part of the ABC transporter complex XylFGH involved in xylose import. Responsible for energy coupling to the transport system. The chain is Xylose import ATP-binding protein XylG from Pseudomonas savastanoi pv. phaseolicola (strain 1448A / Race 6) (Pseudomonas syringae pv. phaseolicola (strain 1448A / Race 6)).